We begin with the raw amino-acid sequence, 58 residues long: UPF0391 membrane protein Maqu_2901 (58 aa).

The next 2 membrane-spanning stretches (helical) occupy residues 4 to 24 and 28 to 48; these read WAIV…GGIA and AGFA…SLVV.

This sequence belongs to the UPF0391 family.

Its subcellular location is the cell membrane. This Marinobacter nauticus (strain ATCC 700491 / DSM 11845 / VT8) (Marinobacter aquaeolei) protein is UPF0391 membrane protein Maqu_2901.